The following is a 464-amino-acid chain: MSVIKEYRTVSEVVGPLMIVDQVAGVHFNELVEIQLHDGSKRQGQVLEVQEDKAMVQLFEGSSGINLEKAKVRFTGRPLELPVSEDMVGRIFNGMGKPIDGGPAILPEKYLDIDGQAINPVARDYPDEFIQTGISAIDHLNTLVRGQKLPVFSGSGLPHKELAAQIARQATVLNSDENFAVVFAAMGITFEEAEFFMNDLRETGAIDRSVLFINLANDPAIERIATPRIALTAAEYLAYEKDMHVLVIMTDMTNYCEALREVSAARREVPGRRGYPGYLYTNLSTLYERAGRLVGKKGSVTQIPILSMPEDDITHPIPDLTGYITEGQIILSRDLYNSGYRPPINVLPSLSRLKDKGSGEGKTRGDHAATMNQLFAAYAQGKQAKELAVVLGESALSETDKLYVRFTDRFEQEYINQGFQTNRTIEESLDLGWELLSILPRTELKRIKDDMIDQYLPQTKEEER.

This sequence belongs to the ATPase alpha/beta chains family.

Functionally, produces ATP from ADP in the presence of a proton gradient across the membrane. The V-type beta chain is a regulatory subunit. This Streptococcus gordonii (strain Challis / ATCC 35105 / BCRC 15272 / CH1 / DL1 / V288) protein is V-type ATP synthase beta chain.